The chain runs to 164 residues: Mediator of RNA polymerase II transcription subunit 21 (164 aa).

The disordered stretch occupies residues 49–81 (APLPANQTQQGSTLGSNRQTVSPSTQAEAESNF). Residues 53-81 (ANQTQQGSTLGSNRQTVSPSTQAEAESNF) are compositionally biased toward polar residues. Residues 114–146 (ESQLKIIDDLSKELQSVEQEQVKKIQEKDKLLK) adopt a coiled-coil conformation.

This sequence belongs to the Mediator complex subunit 21 family. In terms of assembly, component of the Mediator complex.

It localises to the nucleus. Functionally, component of the Mediator complex, a coactivator involved in the regulated transcription of nearly all RNA polymerase II-dependent genes. Mediator functions as a bridge to convey information from gene-specific regulatory proteins to the basal RNA polymerase II transcription machinery. Mediator is recruited to promoters by direct interactions with regulatory proteins and serves as a scaffold for the assembly of a functional preinitiation complex with RNA polymerase II and the general transcription factors. The polypeptide is Mediator of RNA polymerase II transcription subunit 21 (SRB7) (Scheffersomyces stipitis (strain ATCC 58785 / CBS 6054 / NBRC 10063 / NRRL Y-11545) (Yeast)).